A 221-amino-acid chain; its full sequence is Cytidylate kinase 1 (221 aa).

An ATP-binding site is contributed by 7–15; the sequence is GPSASGKSS.

It belongs to the cytidylate kinase family. Type 1 subfamily.

It localises to the cytoplasm. The catalysed reaction is CMP + ATP = CDP + ADP. The enzyme catalyses dCMP + ATP = dCDP + ADP. This Borrelia garinii subsp. bavariensis (strain ATCC BAA-2496 / DSM 23469 / PBi) (Borreliella bavariensis) protein is Cytidylate kinase 1.